A 62-amino-acid chain; its full sequence is Conotoxin Pn-B02 (62 aa).

Positions 1-19 (MRCLPVFIILLLLIASAPS) are cleaved as a signal peptide. Residues 20–49 (FDALPKTEDNVPLSSFHDNLKRTRRIHLNI) constitute a propeptide that is removed on maturation. Position 61 is an alanine amide (A61).

The protein belongs to the conotoxin T superfamily. Contains 2 disulfide bonds that can be either 'C1-C3, C2-C4' or 'C1-C4, C2-C3', since these disulfide connectivities have been observed for conotoxins with cysteine framework V (for examples, see AC P0DQQ7 and AC P81755). In terms of tissue distribution, expressed by the venom duct.

It is found in the secreted. The sequence is that of Conotoxin Pn-B02 from Conus pennaceus (Feathered cone).